Consider the following 245-residue polypeptide: 2,3-bisphosphoglycerate-dependent phosphoglycerate mutase (245 aa).

Substrate is bound by residues 8 to 15 (RHGQSLWN), 21 to 22 (TG), R60, 87 to 90 (ERHY), K98, 114 to 115 (RR), and 183 to 184 (GN). H9 serves as the catalytic Tele-phosphohistidine intermediate. The active-site Proton donor/acceptor is E87.

Belongs to the phosphoglycerate mutase family. BPG-dependent PGAM subfamily.

It catalyses the reaction (2R)-2-phosphoglycerate = (2R)-3-phosphoglycerate. Its pathway is carbohydrate degradation; glycolysis; pyruvate from D-glyceraldehyde 3-phosphate: step 3/5. Catalyzes the interconversion of 2-phosphoglycerate and 3-phosphoglycerate. In Bacillus mycoides (strain KBAB4) (Bacillus weihenstephanensis), this protein is 2,3-bisphosphoglycerate-dependent phosphoglycerate mutase.